A 228-amino-acid polypeptide reads, in one-letter code: Ribosomal RNA small subunit methyltransferase G (228 aa).

S-adenosyl-L-methionine-binding positions include Gly-89, Leu-94, 140-141 (VE), and Arg-159.

It belongs to the methyltransferase superfamily. RNA methyltransferase RsmG family.

The protein resides in the cytoplasm. The enzyme catalyses guanosine(527) in 16S rRNA + S-adenosyl-L-methionine = N(7)-methylguanosine(527) in 16S rRNA + S-adenosyl-L-homocysteine. Specifically methylates the N7 position of guanine in position 527 of 16S rRNA. The protein is Ribosomal RNA small subunit methyltransferase G of Burkholderia lata (strain ATCC 17760 / DSM 23089 / LMG 22485 / NCIMB 9086 / R18194 / 383).